We begin with the raw amino-acid sequence, 573 residues long: Urease subunit alpha (573 aa).

Residues 136-573 (GAIDCHVHFI…LPMAQRYFLF (438 aa)) form the Urease domain. Positions 141, 143, and 224 each coordinate Ni(2+). At K224 the chain carries N6-carboxylysine. Residue H226 coordinates substrate. Ni(2+) is bound by residues H253 and H279. The Proton donor role is filled by H327. D367 lines the Ni(2+) pocket.

This sequence belongs to the metallo-dependent hydrolases superfamily. Urease alpha subunit family. In terms of assembly, heterotrimer of UreA (gamma), UreB (beta) and UreC (alpha) subunits. Three heterotrimers associate to form the active enzyme. It depends on Ni cation as a cofactor. Carboxylation allows a single lysine to coordinate two nickel ions.

The protein localises to the cytoplasm. The enzyme catalyses urea + 2 H2O + H(+) = hydrogencarbonate + 2 NH4(+). The protein operates within nitrogen metabolism; urea degradation; CO(2) and NH(3) from urea (urease route): step 1/1. The sequence is that of Urease subunit alpha from Nocardia farcinica (strain IFM 10152).